Reading from the N-terminus, the 439-residue chain is MKELDLSDPLSMVLKIAELTTRHNVWRLRESINLIASENVMSLTALKAYLSDFMFRYAEGKPFKRYYQGTRYIDELEVLTGELMGSMMGTNLVELRPVSGTIANASVFRVLAEPGDKAVIAPVQAGAHVSHTKFGTLGALGIEQVSMPYDEENMNVDVDKAVKLIEEVKPRFAVLGGSVYIFPHPTREIAEAIHSVGGKLIYDAAHVLGLIMGGAWPNPLERGADAVTGSTHKTFPGPQGGAVFFRDEQLYKKVSKTIFPWWVSNHHLHRIPATAITAVEMKLYGRDYASQVTSNARKLAEALAAEGLKVIGEHLGYTRSHQVVVDVRDLGGGAKCASLLEESNIIVNKNLLPWDPPEAVKDPSGIRIGVQEVTRLGMKHGEMEEIAKLIRKVLIDKEDPKKVAEQVKEFRKQFMKIHYSLDDKDVRIDTIADILSLAQ.

127–129 (AHV) provides a ligand contact to (6S)-5,6,7,8-tetrahydrofolate. N6-(pyridoxal phosphate)lysine is present on Lys233.

Belongs to the SHMT family. In terms of assembly, homodimer. Pyridoxal 5'-phosphate serves as cofactor.

The protein resides in the cytoplasm. Its pathway is amino-acid biosynthesis; glycine biosynthesis; glycine from L-serine: step 1/1. Its function is as follows. Catalyzes the reversible interconversion of serine and glycine with a modified folate serving as the one-carbon carrier. Also exhibits a pteridine-independent aldolase activity toward beta-hydroxyamino acids, producing glycine and aldehydes, via a retro-aldol mechanism. This chain is Serine hydroxymethyltransferase, found in Aeropyrum pernix (strain ATCC 700893 / DSM 11879 / JCM 9820 / NBRC 100138 / K1).